Reading from the N-terminus, the 29-residue chain is Cytochrome b6-f complex subunit 8 (29 aa).

Residues 3–23 (IVDIAWAALMVVFTFSLSLVV) form a helical membrane-spanning segment.

It belongs to the PetN family. The 4 large subunits of the cytochrome b6-f complex are cytochrome b6, subunit IV (17 kDa polypeptide, PetD), cytochrome f and the Rieske protein, while the 4 small subunits are PetG, PetL, PetM and PetN. The complex functions as a dimer.

It localises to the plastid. The protein resides in the chloroplast thylakoid membrane. In terms of biological role, component of the cytochrome b6-f complex, which mediates electron transfer between photosystem II (PSII) and photosystem I (PSI), cyclic electron flow around PSI, and state transitions. The protein is Cytochrome b6-f complex subunit 8 of Gnetum parvifolium (Small-leaved jointfir).